The following is a 278-amino-acid chain: Extracellular metalloprotease MCYG_03238 (278 aa).

The signal sequence occupies residues 1-19 (MRFSIVLSSIAALSSVAAA). Residue Asn52 is glycosylated (N-linked (GlcNAc...) asparagine). His170 is a binding site for Zn(2+). The active site involves Glu171. His174 lines the Zn(2+) pocket. An intrachain disulfide couples Cys209 to Cys255.

This sequence belongs to the peptidase M43B family.

Its subcellular location is the secreted. Secreted metalloproteinase that allows assimilation of proteinaceous substrates. Plays a pivotal role as a pathogenicity determinant during infections and contributes to the ability of the pathogen to persist within the mammalian host. In Arthroderma otae (strain ATCC MYA-4605 / CBS 113480) (Microsporum canis), this protein is Extracellular metalloprotease MCYG_03238.